Reading from the N-terminus, the 270-residue chain is 3-methyl-2-oxobutanoate hydroxymethyltransferase (270 aa).

Positions 53 and 92 each coordinate Mg(2+). 3-methyl-2-oxobutanoate is bound by residues 53-54 (DS), aspartate 92, and lysine 120. A Mg(2+)-binding site is contributed by glutamate 122. Glutamate 189 acts as the Proton acceptor in catalysis.

It belongs to the PanB family. As to quaternary structure, homodecamer; pentamer of dimers. Mg(2+) serves as cofactor.

The protein localises to the cytoplasm. The enzyme catalyses 3-methyl-2-oxobutanoate + (6R)-5,10-methylene-5,6,7,8-tetrahydrofolate + H2O = 2-dehydropantoate + (6S)-5,6,7,8-tetrahydrofolate. The protein operates within cofactor biosynthesis; (R)-pantothenate biosynthesis; (R)-pantoate from 3-methyl-2-oxobutanoate: step 1/2. Catalyzes the reversible reaction in which hydroxymethyl group from 5,10-methylenetetrahydrofolate is transferred onto alpha-ketoisovalerate to form ketopantoate. In Saccharophagus degradans (strain 2-40 / ATCC 43961 / DSM 17024), this protein is 3-methyl-2-oxobutanoate hydroxymethyltransferase.